The chain runs to 626 residues: Phosphoenolpyruvate carboxykinase (ATP) 2 (626 aa).

Disordered stretches follow at residues 1–23 (MASP…APVN) and 64–86 (PNLV…KHQQ). 324–331 (GLSGTGKT) is a binding site for ATP.

Belongs to the phosphoenolpyruvate carboxykinase (ATP) family. As to quaternary structure, homohexamer.

The protein localises to the cytoplasm. The enzyme catalyses oxaloacetate + ATP = phosphoenolpyruvate + ADP + CO2. Its pathway is carbohydrate biosynthesis; gluconeogenesis. In Urochloa panicoides (Panic liverseed grass), this protein is Phosphoenolpyruvate carboxykinase (ATP) 2 (PCK2).